A 226-amino-acid chain; its full sequence is uncharacterized protein (226 aa).

Residues 121 to 163 (TVDELIKTIEKELNKVKKSRKNREKKTNEVEEIIEELIEEDDI) are a coiled coil.

This is an uncharacterized protein from Methanocaldococcus jannaschii (strain ATCC 43067 / DSM 2661 / JAL-1 / JCM 10045 / NBRC 100440) (Methanococcus jannaschii).